Consider the following 303-residue polypeptide: Probable cell division protein WhiA (303 aa).

A DNA-binding region (H-T-H motif) is located at residues serine 272–leucine 303.

This sequence belongs to the WhiA family.

Functionally, involved in cell division and chromosome segregation. The protein is Probable cell division protein WhiA of Streptococcus pyogenes serotype M6 (strain ATCC BAA-946 / MGAS10394).